The following is a 532-amino-acid chain: Protein FAM227B (532 aa).

A coiled-coil region spans residues 432–482 (DNKKDFKRVKQRIKDDIKFLREQQELIDKELDRIQAKASKNLQEVKNEFEN). The disordered stretch occupies residues 494-532 (KEEYGGSTSASESPQSMQSPQSSSSFPTISEDFNNVEEG). Residues 500 to 523 (STSASESPQSMQSPQSSSSFPTIS) are compositionally biased toward low complexity.

It belongs to the FAM227 family.

The sequence is that of Protein FAM227B (Fam227b) from Mus musculus (Mouse).